The primary structure comprises 398 residues: Succinate--CoA ligase [ADP-forming] subunit beta (398 aa).

An ATP-grasp domain is found at 9–254; that stretch reads KALLGEFGVP…ETEEDAKEIE (246 aa). ATP-binding positions include Lys46, 53 to 55, Glu109, Ser112, and Glu117; that span reads GRG. Mg(2+)-binding residues include Asn209 and Asp223. Residues Asn274 and 331 to 333 each bind substrate; that span reads GIM.

The protein belongs to the succinate/malate CoA ligase beta subunit family. As to quaternary structure, heterotetramer of two alpha and two beta subunits. The cofactor is Mg(2+).

The enzyme catalyses succinate + ATP + CoA = succinyl-CoA + ADP + phosphate. The catalysed reaction is GTP + succinate + CoA = succinyl-CoA + GDP + phosphate. Its pathway is carbohydrate metabolism; tricarboxylic acid cycle; succinate from succinyl-CoA (ligase route): step 1/1. In terms of biological role, succinyl-CoA synthetase functions in the citric acid cycle (TCA), coupling the hydrolysis of succinyl-CoA to the synthesis of either ATP or GTP and thus represents the only step of substrate-level phosphorylation in the TCA. The beta subunit provides nucleotide specificity of the enzyme and binds the substrate succinate, while the binding sites for coenzyme A and phosphate are found in the alpha subunit. The protein is Succinate--CoA ligase [ADP-forming] subunit beta of Bradyrhizobium diazoefficiens (strain JCM 10833 / BCRC 13528 / IAM 13628 / NBRC 14792 / USDA 110).